A 450-amino-acid polypeptide reads, in one-letter code: MEQAPPDPERQLQPAPLEPLGSPDAGLGAAVGKEAEGAGEESSGVDTMTHNNFWLKKIEISVSEAEKRTGRNAMNMQETYTAYLIETRSVEHTDGQSVLTDSLWRRYSEFELLRSYLLVYYPHIVVPPLPEKRAEFVWHKLSADNMDPDFVERRRIGLENFLLRIASHPILCRDKIFYLFLTQEGNWKETVNETGFQLKADSRLKALNATFRVKNPDKRFTDLKHYSDELQSVISHLLRVRARVADRLYGVYKVHGNYGRVFSEWSAIEKEMGDGLQSAGHHMDVYASSIDDILEDEEHYADQLKEYLFYAEALRAVCRKHELMQYDLEMAAQDLASKKQQCEELVTGTVRTFSLKGMTTKLFGQETPEQREARIKVLEEQINEGEQQLKSKNLEGREFVKNAWADIERFKEQKNRDLKEALISYAVMQISMCKKGIQVWTNAKECFSKM.

Met-1 carries the N-acetylmethionine modification. The segment at 1–46 (MEQAPPDPERQLQPAPLEPLGSPDAGLGAAVGKEAEGAGEESSGVD) is disordered. Phosphoserine is present on Ser-22. A PX domain is found at 61-187 (SVSEAEKRTG…YLFLTQEGNW (127 aa)). The a 1,2-diacyl-sn-glycero-3-phospho-(1D-myo-inositol-3-phosphate) site is built by Arg-106, Ser-108, Lys-132, and Arg-154.

The protein belongs to the sorting nexin family. Heterodimer; heterodimerizes with SNX7 or SNX30. Interacts with WWC1/KIBRA. Identified in a complex with WWC1/KIBRA and dynein components DYNLL1 and DYNC1I2. Interacts with BIN1.

The protein resides in the early endosome membrane. In terms of biological role, involved in the regulation of endocytosis and in several stages of intracellular trafficking. Plays a role in recycling endocytosed transferrin receptor and prevent its degradation. Involved in autophagosome assembly by regulating trafficking and recycling of phospholipid scramblase ATG9A. The protein is Sorting nexin-4 of Homo sapiens (Human).